Here is a 248-residue protein sequence, read N- to C-terminus: Flavodoxin/ferredoxin--NADP reductase (248 aa).

Residues 2 to 101 enclose the FAD-binding FR-type domain; the sequence is ADWVTGKVTK…SEAAGFFVLD (100 aa). Position 17 (D17) interacts with NADP(+). FAD-binding positions include 50–53, Y66, 74–76, and T116; these read RAYS and KLS. NADP(+)-binding positions include 143–144, 173–174, R184, 214–216, and D220; these read AR, SR, and NPQ. 247–248 contacts FAD; it reads YW.

The protein belongs to the ferredoxin--NADP reductase type 1 family. Monomer. It depends on FAD as a cofactor.

The protein resides in the cytoplasm. The catalysed reaction is 2 reduced [2Fe-2S]-[ferredoxin] + NADP(+) + H(+) = 2 oxidized [2Fe-2S]-[ferredoxin] + NADPH. The enzyme catalyses reduced [flavodoxin] + NADP(+) = oxidized [flavodoxin] + NADPH + 2 H(+). In terms of biological role, transports electrons between flavodoxin or ferredoxin and NADPH. Reduces flavodoxin 1, flavodoxin 2 and ferredoxin, ferredoxin being the kinetically and thermodynamically preferred partner. Required for the activation of several enzymes such as pyruvate formate-lyase, anaerobic ribonucleotide reductase and cobalamin-dependent methionine synthase. The polypeptide is Flavodoxin/ferredoxin--NADP reductase (Escherichia coli (strain K12)).